Consider the following 370-residue polypeptide: Thiamine-repressible mitochondrial transport protein THI74 (370 aa).

At 1 to 10 (MNRVGIDVDH) the chain is on the cytoplasmic side. The chain crosses the membrane as a helical span at residues 11 to 31 (MIGVLLLAVVVVFWVGASCLT). The Mitochondrial intermembrane segment spans residues 32-42 (NELLETNAYNK). A helical membrane pass occupies residues 43–63 (PFFLTYLNISSFALYLTPDLW). Residues 64-119 (RIIQSRRKSLQERTERTLPIHTQESFSEFLPLLSSTPSTSSNLSSIADTKVKDTMR) are Cytoplasmic-facing. The helical transmembrane segment at 120 to 140 (LSLLFCVLWFVANLAANAALS) threads the bilayer. The 62-residue stretch at 129 to 190 (FVANLAANAA…SLFGIILIVM (62 aa)) folds into the EamA domain. Residues 141–146 (YTTVAS) are Mitochondrial intermembrane-facing. The chain crosses the membrane as a helical span at residues 147–167 (STILSSTSSFFTLFLATSLGI). Residues 168–169 (ET) lie on the Cytoplasmic side of the membrane. Residues 170-190 (FSTKKLLGLFVSLFGIILIVM) form a helical membrane-spanning segment. Over 191 to 203 (QSSKQQDSVSASS) the chain is Mitochondrial intermembrane. Residues 204–224 (FLVGNTLALLGSLGYSVYTTL) form a helical membrane-spanning segment. Over 225-239 (LKYEISSKGLRLDIQ) the chain is Cytoplasmic. A helical membrane pass occupies residues 240-260 (MFLGYVGIFTFLLFWPILIIL). At 261 to 273 (DITHMETFELPSN) the chain is on the mitochondrial intermembrane side. The helical transmembrane segment at 274–294 (FHISFLVMLNCIIIFVSDYFW) threads the bilayer. Residues 295-303 (CKALILTSP) are Cytoplasmic-facing. Residues 304–324 (LVVTVALTFTIPLAMFADFVW) traverse the membrane as a helical segment. Over 325–326 (RE) the chain is Mitochondrial intermembrane. A helical membrane pass occupies residues 327 to 347 (AFFTPWYIIGVIFIFVSFFLV). Residues 348-370 (NHRGESAVEKDCAAVEKGPILDA) lie on the Cytoplasmic side of the membrane.

Its subcellular location is the mitochondrion membrane. Its function is as follows. May be involved in thiaminediphosphate transport across the mitochondrial membrane. The polypeptide is Thiamine-repressible mitochondrial transport protein THI74 (THI74) (Saccharomyces cerevisiae (strain ATCC 204508 / S288c) (Baker's yeast)).